Consider the following 87-residue polypeptide: Small ribosomal subunit protein bS20 (87 aa).

The segment at 1 to 26 (MANTKSALKRIRQTATRTARNRAVTS) is disordered. The span at 13–23 (QTATRTARNRA) shows a compositional bias: low complexity.

The protein belongs to the bacterial ribosomal protein bS20 family.

Its function is as follows. Binds directly to 16S ribosomal RNA. The sequence is that of Small ribosomal subunit protein bS20 from Akkermansia muciniphila (strain ATCC BAA-835 / DSM 22959 / JCM 33894 / BCRC 81048 / CCUG 64013 / CIP 107961 / Muc).